Reading from the N-terminus, the 128-residue chain is Cystatin-12 (128 aa).

The signal sequence occupies residues 1-21 (MLWKSVLSVALIVLGIHDCSF). Intrachain disulfides connect cysteine 82/cysteine 92 and cysteine 105/cysteine 125. Asparagine 122 carries an N-linked (GlcNAc...) asparagine glycan.

The protein belongs to the cystatin family. As to expression, located at the very proximal caput epididymis (at protein level). Expressed in epididymis, Sertoli cells and testis. Also found to be weakly expressed in ovary and prostate.

The protein localises to the secreted. Its function is as follows. May play a specialized role in spermatogenesis. This Mus musculus (Mouse) protein is Cystatin-12 (Cst12).